The primary structure comprises 110 residues: UPF0145 protein MTH_507 (110 aa).

It belongs to the UPF0145 family.

The chain is UPF0145 protein MTH_507 from Methanothermobacter thermautotrophicus (strain ATCC 29096 / DSM 1053 / JCM 10044 / NBRC 100330 / Delta H) (Methanobacterium thermoautotrophicum).